The primary structure comprises 137 residues: 1,4-dihydroxy-2-naphthoyl-CoA hydrolase (137 aa).

The active site involves aspartate 13.

The protein belongs to the 4-hydroxybenzoyl-CoA thioesterase family. DHNA-CoA hydrolase subfamily.

It carries out the reaction 1,4-dihydroxy-2-naphthoyl-CoA + H2O = 1,4-dihydroxy-2-naphthoate + CoA + H(+). It functions in the pathway cofactor biosynthesis; phylloquinone biosynthesis. It participates in quinol/quinone metabolism; 1,4-dihydroxy-2-naphthoate biosynthesis; 1,4-dihydroxy-2-naphthoate from chorismate: step 7/7. In terms of biological role, catalyzes the hydrolysis of 1,4-dihydroxy-2-naphthoyl-CoA (DHNA-CoA) to 1,4-dihydroxy-2-naphthoate (DHNA), a reaction involved in phylloquinone (vitamin K1) biosynthesis. The protein is 1,4-dihydroxy-2-naphthoyl-CoA hydrolase of Crocosphaera subtropica (strain ATCC 51142 / BH68) (Cyanothece sp. (strain ATCC 51142)).